The following is a 319-amino-acid chain: tRNA uridine(34) hydroxylase (319 aa).

Residues 124–218 (LDEDTVILDA…YGKNEETKGE (95 aa)) enclose the Rhodanese domain. Cysteine 178 functions as the Cysteine persulfide intermediate in the catalytic mechanism.

This sequence belongs to the TrhO family.

It catalyses the reaction uridine(34) in tRNA + AH2 + O2 = 5-hydroxyuridine(34) in tRNA + A + H2O. Catalyzes oxygen-dependent 5-hydroxyuridine (ho5U) modification at position 34 in tRNAs. The polypeptide is tRNA uridine(34) hydroxylase (Listeria monocytogenes serovar 1/2a (strain ATCC BAA-679 / EGD-e)).